The chain runs to 570 residues: Urease subunit alpha 1 (570 aa).

One can recognise a Urease domain in the interval 131–570 (GGIDTHVHFI…VPMAQRYFLF (440 aa)). Ni(2+) is bound by residues H136, H138, and K219. N6-carboxylysine is present on K219. Residue H221 coordinates substrate. Ni(2+) is bound by residues H248 and H274. H322 functions as the Proton donor in the catalytic mechanism. D362 is a binding site for Ni(2+).

Belongs to the metallo-dependent hydrolases superfamily. Urease alpha subunit family. As to quaternary structure, heterotrimer of UreA (gamma), UreB (beta) and UreC (alpha) subunits. Three heterotrimers associate to form the active enzyme. It depends on Ni cation as a cofactor. Post-translationally, carboxylation allows a single lysine to coordinate two nickel ions.

It localises to the cytoplasm. The catalysed reaction is urea + 2 H2O + H(+) = hydrogencarbonate + 2 NH4(+). It participates in nitrogen metabolism; urea degradation; CO(2) and NH(3) from urea (urease route): step 1/1. Its function is as follows. Disrupting the ure1 operon causes loss of urease activity, decreased resistance to low pH killing in vitro and decreased pathogen survival when inoculated in BALB/c mice by gavage. This chain is Urease subunit alpha 1, found in Brucella suis biovar 1 (strain 1330).